A 359-amino-acid polypeptide reads, in one-letter code: NADPH HC-toxin reductase 2 (359 aa).

NADP(+) contacts are provided by residues Arg-39, 67–68, 87–89, Tyr-177, Lys-181, 206–209, and Thr-221; these read DL, VAT, and LGLV. The active-site Proton donor is the Lys-181.

Belongs to the NAD(P)-dependent epimerase/dehydratase family.

Functionally, in tandem with Hm1, NADPH-dependent HC toxin reductase (HCTR), which inactivates HC toxin, a cyclic tetrapeptide produced by the fungus Cochliobolus carbonum to permit infection and acting as an inhibitor of host histone deacetylases (HDACs), thus conferring resistance against C.carbonum race 1 in resistant cultivars (e.g. cv. B73 and cv. Wisconsin 22). Catalyzes the production of 8-hydroxy derivative of HC-toxin via the reduction of the 8-keto group of 2-amino-9,10-epoxy-8-oxo-decanoic acid, an amino acid of the HC-toxin. In Zea mays (Maize), this protein is NADPH HC-toxin reductase 2.